We begin with the raw amino-acid sequence, 65 residues long: Small ribosomal subunit protein bS21 (65 aa).

The segment covering 46 to 57 has biased composition (basic residues); that stretch reads RLKRSRSKRRAQ. The segment at 46-65 is disordered; that stretch reads RLKRSRSKRRAQRANEERNS.

Belongs to the bacterial ribosomal protein bS21 family.

The chain is Small ribosomal subunit protein bS21 from Chlorobaculum tepidum (strain ATCC 49652 / DSM 12025 / NBRC 103806 / TLS) (Chlorobium tepidum).